Consider the following 559-residue polypeptide: 3-aminoavenalumate diazotase (559 aa).

Ser-181 contacts Mg(2+). 3 residues coordinate ATP: Ala-227, Gly-332, and Ser-336. Glu-337 contributes to the Mg(2+) binding site. Residues Asp-416 and Arg-437 each contribute to the ATP site.

This sequence belongs to the ATP-dependent AMP-binding enzyme family. Mg(2+) is required as a cofactor.

It carries out the reaction 3-aminoavenalumate + nitrite + ATP = 3-diazoavenalumate + AMP + diphosphate + H2O. The catalysed reaction is (E)-3-aminocoumarate + nitrite + ATP + H(+) = (E)-3-diazocoumarate + AMP + diphosphate + H2O. The enzyme catalyses 3-amino-4-hydroxybenzoate + nitrite + ATP + H(+) = 3-diazo-4-hydroxybenzoate + AMP + diphosphate + H2O. Functionally, ligase involved in the biosynthesis of avenalumic acid (AVA). Catalyzes the diazotization of 3-aminoavenalumic acid (3-AAA) to 3-diazoavenalumic acid (3-DAA). It can also act on 3-aminocoumaric acid (3-ACA) and 3-amino-4-hydroxybenzoic acid (3,4-AHBA) with lower activity. The sequence is that of 3-aminoavenalumate diazotase from Streptomyces sp.